The primary structure comprises 407 residues: Arrestin red cell isoform 1 (407 aa).

The protein belongs to the arrestin family.

Its subcellular location is the cytoplasm. The protein is Arrestin red cell isoform 1 of Oncorhynchus mykiss (Rainbow trout).